The sequence spans 516 residues: 2,3-bisphosphoglycerate-independent phosphoglycerate mutase (516 aa).

Residues D13 and S63 each contribute to the Mn(2+) site. S63 functions as the Phosphoserine intermediate in the catalytic mechanism. Substrate is bound by residues H124, 154 to 155 (RD), R186, R192, 262 to 265 (RPDR), and K337. 5 residues coordinate Mn(2+): D404, H408, D445, H446, and H464.

Belongs to the BPG-independent phosphoglycerate mutase family. As to quaternary structure, monomer. Mn(2+) serves as cofactor.

The catalysed reaction is (2R)-2-phosphoglycerate = (2R)-3-phosphoglycerate. It functions in the pathway carbohydrate degradation; glycolysis; pyruvate from D-glyceraldehyde 3-phosphate: step 3/5. Catalyzes the interconversion of 2-phosphoglycerate and 3-phosphoglycerate. This Cellvibrio japonicus (strain Ueda107) (Pseudomonas fluorescens subsp. cellulosa) protein is 2,3-bisphosphoglycerate-independent phosphoglycerate mutase.